The chain runs to 387 residues: Formate-dependent phosphoribosylglycinamide formyltransferase (387 aa).

Residues 12–13 (EL) and Glu72 each bind N(1)-(5-phospho-beta-D-ribosyl)glycinamide. Residues Arg104, Lys145, 150–155 (SSGKGQ), 185–188 (EEFI), and Glu193 contribute to the ATP site. The ATP-grasp domain occupies 109 to 300 (DLAARELGLA…EFELHLRAVL (192 aa)). Glu258 and Glu270 together coordinate Mg(2+). N(1)-(5-phospho-beta-D-ribosyl)glycinamide is bound by residues Asp277, Lys347, and 354–355 (RR).

The protein belongs to the PurK/PurT family. In terms of assembly, homodimer.

The catalysed reaction is N(1)-(5-phospho-beta-D-ribosyl)glycinamide + formate + ATP = N(2)-formyl-N(1)-(5-phospho-beta-D-ribosyl)glycinamide + ADP + phosphate + H(+). Its pathway is purine metabolism; IMP biosynthesis via de novo pathway; N(2)-formyl-N(1)-(5-phospho-D-ribosyl)glycinamide from N(1)-(5-phospho-D-ribosyl)glycinamide (formate route): step 1/1. Its function is as follows. Involved in the de novo purine biosynthesis. Catalyzes the transfer of formate to 5-phospho-ribosyl-glycinamide (GAR), producing 5-phospho-ribosyl-N-formylglycinamide (FGAR). Formate is provided by PurU via hydrolysis of 10-formyl-tetrahydrofolate. This Anaeromyxobacter dehalogenans (strain 2CP-C) protein is Formate-dependent phosphoribosylglycinamide formyltransferase.